Here is a 370-residue protein sequence, read N- to C-terminus: Protein FAM110B (370 aa).

2 disordered regions span residues S127–A151 and K237–L256. Phosphoserine is present on residues S238 and S301. The tract at residues D317–R337 is disordered. Residues S326–N335 are compositionally biased toward basic and acidic residues.

Belongs to the FAM110 family. As to expression, detected in thyroid, spleen and testis, and at lower levels in stomach, spinal cord, lymph node, trachea, adrenal gland, prostate, ovary and intestine.

Its subcellular location is the cytoplasm. It localises to the cytoskeleton. The protein resides in the microtubule organizing center. It is found in the centrosome. Its function is as follows. May be involved in tumor progression. In Homo sapiens (Human), this protein is Protein FAM110B (FAM110B).